A 79-amino-acid polypeptide reads, in one-letter code: Conotoxin 1 (79 aa).

Positions 1-22 (MKLTCVLIITVLFLTASQLITA) are cleaved as a signal peptide. Residues 23–46 (DYSRDQRQYRAVRLGDEMRTFKGA) constitute a propeptide that is removed on maturation. Cystine bridges form between Cys49–Cys62, Cys56–Cys67, and Cys61–Cys77.

This sequence belongs to the conotoxin O1 superfamily. Expressed by the venom duct.

The protein resides in the secreted. This is Conotoxin 1 from Conus vexillum (Flag cone).